A 417-amino-acid polypeptide reads, in one-letter code: Gamma-glutamyl phosphate reductase (417 aa).

It belongs to the gamma-glutamyl phosphate reductase family.

The protein localises to the cytoplasm. The enzyme catalyses L-glutamate 5-semialdehyde + phosphate + NADP(+) = L-glutamyl 5-phosphate + NADPH + H(+). It functions in the pathway amino-acid biosynthesis; L-proline biosynthesis; L-glutamate 5-semialdehyde from L-glutamate: step 2/2. Functionally, catalyzes the NADPH-dependent reduction of L-glutamate 5-phosphate into L-glutamate 5-semialdehyde and phosphate. The product spontaneously undergoes cyclization to form 1-pyrroline-5-carboxylate. In Streptococcus agalactiae serotype III (strain NEM316), this protein is Gamma-glutamyl phosphate reductase.